The following is a 118-amino-acid chain: uncharacterized protein (118 aa).

Residues M1–R118 are disordered. The span at R13–E28 shows a compositional bias: low complexity. Residues T29 to E49 show a composition bias toward basic and acidic residues.

This is an uncharacterized protein from Homo sapiens (Human).